The chain runs to 119 residues: Large ribosomal subunit protein P3 (119 aa).

Residues 81 to 119 (GAAAGAASGGAAAEAPKAEEKKEEEKEESEDDLGFSLFD) are disordered. A compositionally biased stretch (low complexity) spans 84 to 95 (AGAASGGAAAEA).

It belongs to the eukaryotic ribosomal protein P1/P2 family. Phosphorylated.

In terms of biological role, plays an important role in the elongation step of protein synthesis. This Oryza sativa subsp. japonica (Rice) protein is Large ribosomal subunit protein P3.